Consider the following 309-residue polypeptide: Homoserine O-acetyltransferase (309 aa).

C148 serves as the catalytic Acyl-thioester intermediate. K169 and S198 together coordinate substrate. H241 acts as the Proton acceptor in catalysis. E243 is a catalytic residue. Position 255 (R255) interacts with substrate.

The protein belongs to the MetA family.

The protein localises to the cytoplasm. The catalysed reaction is L-homoserine + acetyl-CoA = O-acetyl-L-homoserine + CoA. It participates in amino-acid biosynthesis; L-methionine biosynthesis via de novo pathway; O-acetyl-L-homoserine from L-homoserine: step 1/1. In terms of biological role, transfers an acetyl group from acetyl-CoA to L-homoserine, forming acetyl-L-homoserine. In vitro, can also use propionyl-CoA as acyl donor. This Shouchella clausii (Alkalihalobacillus clausii) protein is Homoserine O-acetyltransferase.